Reading from the N-terminus, the 497-residue chain is Actin-binding protein WASF2 (497 aa).

2 disordered regions span residues Lys-173–Trp-203 and Glu-239–Arg-436. Positions Ser-252–Ser-263 are enriched in low complexity. Pro residues-rich tracts occupy residues Ser-298–Pro-335 and Gly-343–Pro-403. The 18-residue stretch at Ala-435–Val-452 folds into the WH2 domain. Ser-473 carries the post-translational modification Phosphoserine.

Belongs to the SCAR/WAVE family. Binds actin and the Arp2/3 complex. Interacts with BAIAP2. Component of the WAVE2 complex composed of ABI1, CYFIP1/SRA1, NCKAP1/NAP1 (NCKAP1l/HEM1 in hematopoietic cells) and WASF2/WAVE2. Directly interacts with BRK1. Interacts with human cytomegalovirus protein UL135. Interacts with FNBP1L (via the SH3 domain).

It localises to the cytoplasm. It is found in the cytoskeleton. The protein resides in the cell projection. The protein localises to the lamellipodium. Its subcellular location is the basolateral cell membrane. Functionally, downstream effector molecule involved in the transmission of signals from tyrosine kinase receptors and small GTPases to the actin cytoskeleton. Promotes formation of actin filaments. Part of the WAVE complex that regulates lamellipodia formation. The WAVE complex regulates actin filament reorganization via its interaction with the Arp2/3 complex. This Mus musculus (Mouse) protein is Actin-binding protein WASF2.